Consider the following 152-residue polypeptide: Psoriasis susceptibility 1 candidate gene 1 protein homolog (152 aa).

Over residues 1-31 the composition is skewed to polar residues; the sequence is MTCTDQKSHSQRALGTQTPALQGPQLLNTDP. 2 disordered regions span residues 1–39 and 132–152; these read MTCT…TRPP and APTL…SSLI.

The protein is Psoriasis susceptibility 1 candidate gene 1 protein homolog (PSORS1C1) of Pan troglodytes (Chimpanzee).